Consider the following 285-residue polypeptide: Probable endonuclease 4 (285 aa).

Zn(2+) is bound by residues His-68, His-108, Glu-145, Asp-179, His-182, His-216, Asp-229, His-231, and Glu-261.

This sequence belongs to the AP endonuclease 2 family. Zn(2+) is required as a cofactor.

It catalyses the reaction Endonucleolytic cleavage to 5'-phosphooligonucleotide end-products.. In terms of biological role, endonuclease IV plays a role in DNA repair. It cleaves phosphodiester bonds at apurinic or apyrimidinic (AP) sites, generating a 3'-hydroxyl group and a 5'-terminal sugar phosphate. The chain is Probable endonuclease 4 from Geotalea daltonii (strain DSM 22248 / JCM 15807 / FRC-32) (Geobacter daltonii).